The primary structure comprises 140 residues: Large ribosomal subunit protein bL17 (140 aa).

The segment covering 119–133 (DPSAKGAADRARLEE) has biased composition (basic and acidic residues). A disordered region spans residues 119–140 (DPSAKGAADRARLEEEGGMTEE).

It belongs to the bacterial ribosomal protein bL17 family. In terms of assembly, part of the 50S ribosomal subunit. Contacts protein L32.

The sequence is that of Large ribosomal subunit protein bL17 from Maricaulis maris (strain MCS10) (Caulobacter maris).